A 381-amino-acid polypeptide reads, in one-letter code: L-lactate dehydrogenase (381 aa).

An FMN hydroxy acid dehydrogenase domain is found at 1–380 (MIISSASDYR…KPEALVDLSK (380 aa)). Tyr24 contacts substrate. FMN contacts are provided by Ser106 and Gln127. Position 129 (Tyr129) interacts with substrate. FMN is bound at residue Thr155. Arg164 lines the substrate pocket. Lys251 is an FMN binding site. His275 serves as the catalytic Proton acceptor. Residue Arg278 coordinates substrate. Position 306-330 (306-330 (DSGIRNGLDIVRMLALGADATMLGR)) interacts with FMN.

Belongs to the FMN-dependent alpha-hydroxy acid dehydrogenase family. The cofactor is FMN.

It is found in the cell inner membrane. The enzyme catalyses (S)-lactate + A = pyruvate + AH2. Functionally, catalyzes the conversion of L-lactate to pyruvate. Is coupled to the respiratory chain. In Haemophilus influenzae (strain ATCC 51907 / DSM 11121 / KW20 / Rd), this protein is L-lactate dehydrogenase.